The chain runs to 616 residues: Chaperone protein HscA (616 aa).

Belongs to the heat shock protein 70 family.

In terms of biological role, chaperone involved in the maturation of iron-sulfur cluster-containing proteins. Has a low intrinsic ATPase activity which is markedly stimulated by HscB. Involved in the maturation of IscU. The sequence is that of Chaperone protein HscA from Pectobacterium carotovorum subsp. carotovorum (strain PC1).